We begin with the raw amino-acid sequence, 104 residues long: uncharacterized protein (104 aa).

Residues 62–92 are disordered; that stretch reads SSPAASSHPRKRGKEKKERTPTERLAAPARK.

This is an uncharacterized protein from Human adenovirus B serotype 7 (HAdV-7).